Consider the following 786-residue polypeptide: Endonuclease MutS2 (786 aa).

Residue 332-339 coordinates ATP; sequence GPNTGGKT. The 76-residue stretch at 711–786 folds into the Smr domain; that stretch reads IDLRGMDSEE…GTGVTVVILK (76 aa).

Belongs to the DNA mismatch repair MutS family. MutS2 subfamily. Homodimer. Binds to stalled ribosomes, contacting rRNA.

Its function is as follows. Endonuclease that is involved in the suppression of homologous recombination and thus may have a key role in the control of bacterial genetic diversity. Functionally, acts as a ribosome collision sensor, splitting the ribosome into its 2 subunits. Detects stalled/collided 70S ribosomes which it binds and splits by an ATP-hydrolysis driven conformational change. Acts upstream of the ribosome quality control system (RQC), a ribosome-associated complex that mediates the extraction of incompletely synthesized nascent chains from stalled ribosomes and their subsequent degradation. Probably generates substrates for RQC. The protein is Endonuclease MutS2 of Clostridium perfringens (strain SM101 / Type A).